A 187-amino-acid chain; its full sequence is Interferon beta (187 aa).

Residues 1–21 form the signal peptide; sequence MTNKCLLQIALLLCFSTTALS. Tyrosine 24 is subject to Phosphotyrosine. Cysteine 52 and cysteine 162 are joined by a disulfide. N-linked (GlcNAc...) asparagine glycosylation occurs at asparagine 101.

The protein belongs to the alpha/beta interferon family. In terms of assembly, monomer.

The protein localises to the secreted. In terms of biological role, type I interferon cytokine that plays a key role in the innate immune response to infection, developing tumors and other inflammatory stimuli. Signals via binding to high-affinity (IFNAR2) and low-affinity (IFNAR1) heterodimeric receptor, activating the canonical Jak-STAT signaling pathway resulting in transcriptional activation or repression of interferon-regulated genes that encode the effectors of the interferon response, such as antiviral proteins, regulators of cell proliferation and differentiation, and immunoregulatory proteins. Signals mostly via binding to a IFNAR1-IFNAR2 heterodimeric receptor, but can also function with IFNAR1 alone and independently of Jak-STAT pathways. Elicits a wide variety of responses, including antiviral and antibacterial activities, and can regulate the development of B-cells, myelopoiesis and lipopolysaccharide (LPS)-inducible production of tumor necrosis factor. Plays a role in neuronal homeostasis by regulating dopamine turnover and protecting dopaminergic neurons: acts by promoting neuronal autophagy and alpha-synuclein clearance, thereby preventing dopaminergic neuron loss. IFNB1 is more potent than interferon-alpha (IFN-alpha) in inducing the apoptotic and antiproliferative pathways required for control of tumor cell growth. The polypeptide is Interferon beta (Homo sapiens (Human)).